We begin with the raw amino-acid sequence, 420 residues long: 3-isopropylmalate dehydratase large subunit (420 aa).

3 residues coordinate [4Fe-4S] cluster: Cys-300, Cys-360, and Cys-363.

It belongs to the aconitase/IPM isomerase family. LeuC type 2 subfamily. In terms of assembly, heterodimer of LeuC and LeuD. It depends on [4Fe-4S] cluster as a cofactor.

It carries out the reaction (2R,3S)-3-isopropylmalate = (2S)-2-isopropylmalate. It functions in the pathway amino-acid biosynthesis; L-leucine biosynthesis; L-leucine from 3-methyl-2-oxobutanoate: step 2/4. Catalyzes the isomerization between 2-isopropylmalate and 3-isopropylmalate, via the formation of 2-isopropylmaleate. The chain is 3-isopropylmalate dehydratase large subunit from Syntrophus aciditrophicus (strain SB).